Consider the following 301-residue polypeptide: Mitochondrial carnitine/acylcarnitine carrier protein (301 aa).

A2 is modified (N-acetylalanine). At 2–12 (ADEPKPISPFK) the chain is on the cytoplasmic side. Solcar repeat units follow at residues 8–99 (ISPF…GKKL), 108–196 (LSYP…LKNL), and 207–293 (LSVP…AMKF). Residues 13–31 (NLLAGGFGGMCLVFVGHPL) form a helical membrane-spanning segment. At 32–73 (DTVKVRLQTQPPSLSGQPPMYSGTLDCFRKTLMREGITGLYR) the chain is on the mitochondrial matrix side. A helical membrane pass occupies residues 74–93 (GMAAPIIGVTPMFAVCFFGF). At 94 to 112 (GLGKKLQQKSPEDELSYPQ) the chain is on the cytoplasmic side. Residues 113–131 (LFTAGMLSGVFTTGIMTPG) traverse the membrane as a helical segment. Residues 132–170 (ERIKCLLQIQASSGENKYSGTLDCAKKLYQEFGIRGFYK) are Mitochondrial matrix-facing. An N6-acetyllysine mark is found at K148 and K157. K170 carries the post-translational modification N6-acetyllysine; alternate. K170 carries the post-translational modification N6-succinyllysine; alternate. A helical transmembrane segment spans residues 171 to 190 (GTVLTLMRDVPASGMYFMTY). Residues 191–211 (EWLKNLFTPEGKSVSDLSVPR) lie on the Cytoplasmic side of the membrane. A helical transmembrane segment spans residues 212–230 (ILVAGGFAGIFNWAVAIPP). Residues 231–267 (DVLKSRFQTAPPGKYPNGFRDVLRELIREEGVTSLYK) are Mitochondrial matrix-facing. Residues 268–287 (GFNAVMIRAFPANAACFLGF) form a helical membrane-spanning segment. The Cytoplasmic segment spans residues 288–301 (EIAMKFLNWIAPNL).

It belongs to the mitochondrial carrier (TC 2.A.29) family. In terms of tissue distribution, widely expressed, with highest levels in the liver, intermediate levels in heart, testis and kidney and low levels in brain, including cortex, cerebellum, hippocampus and hypothalamus.

The protein resides in the mitochondrion inner membrane. It carries out the reaction O-acetyl-(R)-carnitine(in) + (R)-carnitine(out) = O-acetyl-(R)-carnitine(out) + (R)-carnitine(in). It catalyses the reaction an O-acyl-(R)-carnitine(in) + (R)-carnitine(out) = an O-acyl-(R)-carnitine(out) + (R)-carnitine(in). The catalysed reaction is O-propanoyl-(R)-carnitine(in) + (R)-carnitine(out) = O-propanoyl-(R)-carnitine(out) + (R)-carnitine(in). The enzyme catalyses O-hexadecanoyl-(R)-carnitine(in) + (R)-carnitine(out) = O-hexadecanoyl-(R)-carnitine(out) + (R)-carnitine(in). It carries out the reaction O-octanoyl-(R)-carnitine(in) + (R)-carnitine(out) = O-octanoyl-(R)-carnitine(out) + (R)-carnitine(in). It catalyses the reaction (R)-carnitine(in) = (R)-carnitine(out). Functionally, mediates the electroneutral exchange of acylcarnitines (O-acyl-(R)-carnitine or L-acylcarnitine) of different acyl chain lengths (ranging from O-acetyl-(R)-carnitine to long-chain O-acyl-(R)-carnitines) with free carnitine ((R)-carnitine or L-carnitine) across the mitochondrial inner membrane, via a ping-pong mechanism. Key player in the mitochondrial oxidation pathway, it translocates the fatty acids in the form of acylcarnitines into the mitochondrial matrix, where the carnitine palmitoyltransferase 2 (CPT-2) activates them to undergo fatty acid beta-oxidation. Catalyzes the unidirectional transport (uniport) of carnitine at lower rates than the antiport (exchange). This chain is Mitochondrial carnitine/acylcarnitine carrier protein, found in Mus musculus (Mouse).